The primary structure comprises 309 residues: Coenzyme PQQ synthesis protein B (309 aa).

The protein belongs to the PqqB family.

The protein operates within cofactor biosynthesis; pyrroloquinoline quinone biosynthesis. Its function is as follows. May be involved in the transport of PQQ or its precursor to the periplasm. The polypeptide is Coenzyme PQQ synthesis protein B (Bradyrhizobium diazoefficiens (strain JCM 10833 / BCRC 13528 / IAM 13628 / NBRC 14792 / USDA 110)).